We begin with the raw amino-acid sequence, 266 residues long: Ubiquinone biosynthesis protein COQ4 homolog, mitochondrial (266 aa).

Zn(2+) is bound by residues His-169, Asp-170, His-173, and Glu-185.

It belongs to the COQ4 family. Component of a multi-subunit COQ enzyme complex. Requires Zn(2+) as cofactor.

It localises to the mitochondrion inner membrane. The enzyme catalyses a 4-hydroxy-3-methoxy-5-(all-trans-polyprenyl)benzoate + H(+) = a 2-methoxy-6-(all-trans-polyprenyl)phenol + CO2. Its pathway is cofactor biosynthesis; ubiquinone biosynthesis. In terms of biological role, lyase that catalyzes the C1-decarboxylation of 4-hydroxy-3-methoxy-5-(all-trans-polyprenyl)benzoic acid into 2-methoxy-6-(all-trans-polyprenyl)phenol during ubiquinone biosynthesis. The polypeptide is Ubiquinone biosynthesis protein COQ4 homolog, mitochondrial (Drosophila ananassae (Fruit fly)).